The sequence spans 158 residues: Large ribosomal subunit protein uL11 (158 aa).

The disordered stretch occupies residues 1 to 21; it reads MAQSVKTMVEGGKATTGPPIG.

This sequence belongs to the universal ribosomal protein uL11 family. As to quaternary structure, part of the ribosomal stalk of the 50S ribosomal subunit. Interacts with L10 and the large rRNA to form the base of the stalk. L10 forms an elongated spine to which L12 dimers bind in a sequential fashion forming a multimeric L10(L12)X complex.

Its function is as follows. Forms part of the ribosomal stalk which helps the ribosome interact with GTP-bound translation factors. The chain is Large ribosomal subunit protein uL11 from Thermoplasma volcanium (strain ATCC 51530 / DSM 4299 / JCM 9571 / NBRC 15438 / GSS1).